Consider the following 492-residue polypeptide: MATFKDACFHYRKITKINRELLKIGANSIWTPVRSDKIKGWCIECCQLTELVFCSGCSLAHVCQWCVRNKRCFLDSQPHLLKLRTFEAPITKEKLQCVISMYNMLFPINENIINRFKKNVKQKKCRNEFNATWYNQLLLPITLNAAVFKFQSRIVYVFGFYEGTTACGYLPYRMVNCIDIYDRLLLDSVNFDRMSALPSDLQALYAQKYFKISRLPSMKLRQVYYSDFTKQNLITKYRTKTRITHRNVSKINWDTDIELHNDLMHNKHRILTALTTAEEKQFEVHDVNLGRIKADMFELGHHCKPNYISSNHWQPASRVSLCRWCNIKYAFRNMDWRMESMYNELMSFIQSCYKSNANVDHCSSIESVYPMVRNVFWHSTTKYIDETLEKLFNMMNPVNIDNQKVISFHWQIDLSLYLHIKMILKTEALPFMLKVHEFQSIVKGIINQWCDFSKVSELPICVESTDTLLRMYEQGELSEEYELLISDSDGDE.

Residues 1–81 (MATFKDACFH…CFLDSQPHLL (81 aa)) form an RNA-binding region. The tract at residues 42–79 (CIECCQLTELVFCSGCSLAHVCQWCVRNKRCFLDSQPH) is zinc-binding domain. An important for cytoskeleton localization region spans residues 82 to 176 (KLRTFEAPIT…CGYLPYRMVN (95 aa)). The interval 318-492 (RVSLCRWCNI…LLISDSDGDE (175 aa)) is interaction with host IRF3. A pLxIS motif motif is present at residues 483–486 (LLIS).

Belongs to the rotavirus NSP1 family. Interacts (via C-terminus) with host IRF3; this interaction leads to IRF3 degradation. Interacts with host IRF7; this interaction leads to IRF7 degradation. Interacts with host CUL1 and CUL3.

It is found in the host cytoplasm. It localises to the host cytoskeleton. Its function is as follows. Plays a role in the inhibition of host innate immunity by inducing the degradation of key host factors required to activate interferon production such as IRF3, IRF5 or IRF7. Associates with components of cullin RING ligases (CRLs) including CUL1 or CUL3, which are essential multisubunit ubiquitination complexes, to modulate their activities. The polypeptide is Non-structural protein 1 (Rotavirus A (isolate RVA/Equine/United Kingdom/L338/1988/G13P12[18]) (RV-A)).